Consider the following 505-residue polypeptide: Apolipoprotein N-acyltransferase (505 aa).

A run of 6 helical transmembrane segments spans residues 26–46 (FAPY…LILL), 66–86 (FATG…MPLI), 89–109 (LFLM…FAWL), 129–149 (LWLI…WLWL), 161–181 (FAPI…AGAL), and 186–206 (IHKQ…GFGI). The 247-residue stretch at 225-471 (IQGNVDQNLK…TAVLRAELTP (247 aa)) folds into the CN hydrolase domain. The active-site Proton acceptor is glutamate 264. Lysine 330 is an active-site residue. The Nucleophile role is filled by cysteine 382. Residues 481 to 501 (FGTWPLYFWVALSLMLAWWLP) form a helical membrane-spanning segment.

The protein belongs to the CN hydrolase family. Apolipoprotein N-acyltransferase subfamily.

The protein localises to the cell inner membrane. It catalyses the reaction N-terminal S-1,2-diacyl-sn-glyceryl-L-cysteinyl-[lipoprotein] + a glycerophospholipid = N-acyl-S-1,2-diacyl-sn-glyceryl-L-cysteinyl-[lipoprotein] + a 2-acyl-sn-glycero-3-phospholipid + H(+). Its pathway is protein modification; lipoprotein biosynthesis (N-acyl transfer). In terms of biological role, catalyzes the phospholipid dependent N-acylation of the N-terminal cysteine of apolipoprotein, the last step in lipoprotein maturation. In Vibrio parahaemolyticus serotype O3:K6 (strain RIMD 2210633), this protein is Apolipoprotein N-acyltransferase.